A 1034-amino-acid chain; its full sequence is Ubiquitin-like-specific protease 2 (1034 aa).

Disordered stretches follow at residues 1–42, 71–110, 388–419, 731–800, 841–960, and 983–1034; these read MSAR…FRKD, IELSDNDVDNNDEGEGVNSGCSDQDFEPLQSSPLKRHSSL, SHAVSQLRRSNRFKDVSDPANSNSNSEFDDAT, IDQS…PIRH, GVSS…DSLG, and SSPT…DEDP. Low complexity predominate over residues 19 to 33; that stretch reads SSRASSPRSSASLPP. The segment covering 74–85 has biased composition (acidic residues); the sequence is SDNDVDNNDEGE. The span at 743–756 shows a compositional bias: low complexity; sequence TSEPPCSRSSSIST. At S788 the chain carries Phosphoserine. 3 stretches are compositionally biased toward polar residues: residues 845-856, 876-904, and 912-923; these read PIKNDQALSSTH, QLSSHVQSLSTDSMERQSSPNNTNIVISD, and GVNSESKNTSGI. S903 is modified (phosphoserine). Residues S983 and S984 each carry the phosphoserine modification. Positions 992–1017 are enriched in polar residues; sequence TSATSKGSNAQLLSNYGDENNQSQDS.

Belongs to the peptidase C48 family.

Its function is as follows. Insertion mutation in SMT4 confers temperature and benomyl sensitivity; high copy suppressor of a temperature sensitive mutation in MIF2. The polypeptide is Ubiquitin-like-specific protease 2 (ULP2) (Saccharomyces cerevisiae (strain ATCC 204508 / S288c) (Baker's yeast)).